Reading from the N-terminus, the 775-residue chain is Dipeptidyl peptidase 4 (775 aa).

A signal peptide spans 1–15 (MKFLSLLLLVGVAQA). N81, N111, and N219 each carry an N-linked (GlcNAc...) asparagine glycan. Catalysis depends on charge relay system residues S613, D690, and H725. A glycan (N-linked (GlcNAc...) asparagine) is linked at N731.

Belongs to the peptidase S9B family.

The protein localises to the secreted. The catalysed reaction is Release of an N-terminal dipeptide, Xaa-Yaa-|-Zaa-, from a polypeptide, preferentially when Yaa is Pro, provided Zaa is neither Pro nor hydroxyproline.. In terms of biological role, extracellular dipeptidyl-peptidase which removes N-terminal dipeptides sequentially from polypeptides having unsubstituted N-termini provided that the penultimate residue is proline. Contributes to pathogenicity. The chain is Dipeptidyl peptidase 4 (DPP4) from Arthroderma otae (strain ATCC MYA-4605 / CBS 113480) (Microsporum canis).